Here is a 562-residue protein sequence, read N- to C-terminus: F-box only protein 33 (562 aa).

The F-box domain maps to 68–114 (AAGAASLPSELIVHIFSFLPAPDRLRASASCSHWRECLFYPALWPQL). Gly residues predominate over residues 155–173 (GGGPGDGGSGGGTDTGTGG). Residues 155 to 176 (GGGPGDGGSGGGTDTGTGGEDG) form a disordered region.

Part of the SCF (SKP1-CUL1-F-box) E3 ubiquitin-protein ligase complex SCF(FBXO33) formed of CUL1, SKP1, RBX1 and FBXO33. Interacts via its N-terminus with YBX1 CSD domain. Directly interacts with SKP1 and CUL1.

It functions in the pathway protein modification; protein ubiquitination. In terms of biological role, substrate recognition component of a SCF (SKP1-CUL1-F-box protein) E3 ubiquitin-protein ligase complex which mediates the ubiquitination and subsequent proteasomal degradation of target proteins. Probably recognizes and binds to phosphorylated target proteins. Recognizes YBX1. The protein is F-box only protein 33 (Fbxo33) of Mus musculus (Mouse).